Consider the following 493-residue polypeptide: Cytochrome P450 2E1 (493 aa).

298-303 (FAGTET) contacts substrate. Residue cysteine 437 participates in heme binding.

Belongs to the cytochrome P450 family. In terms of assembly, interacts with chaperones HSP70 and HSP90; this interaction is required for initial targeting to mitochondria. Requires heme as cofactor.

Its subcellular location is the endoplasmic reticulum membrane. The protein localises to the microsome membrane. It is found in the mitochondrion inner membrane. It carries out the reaction an organic molecule + reduced [NADPH--hemoprotein reductase] + O2 = an alcohol + oxidized [NADPH--hemoprotein reductase] + H2O + H(+). The catalysed reaction is (5Z,8Z,11Z)-eicosatrienoate + reduced [NADPH--hemoprotein reductase] + O2 = 19-hydroxy-(5Z,8Z,11Z)-eicosatrienoate + oxidized [NADPH--hemoprotein reductase] + H2O + H(+). The enzyme catalyses (5Z,8Z,11Z,14Z,17Z)-eicosapentaenoate + reduced [NADPH--hemoprotein reductase] + O2 = 19-hydroxy-(5Z,8Z,11Z,14Z,17Z)-eicosapentaenoate + oxidized [NADPH--hemoprotein reductase] + H2O + H(+). It catalyses the reaction (4Z,7Z,10Z,13Z,16Z,19Z)-docosahexaenoate + reduced [NADPH--hemoprotein reductase] + O2 = 21-hydroxy-(4Z,7Z,10Z,13Z,16Z,19Z)-docosahexaenoate + oxidized [NADPH--hemoprotein reductase] + H2O + H(+). It carries out the reaction dodecanoate + reduced [NADPH--hemoprotein reductase] + O2 = 11-hydroxydodecanoate + oxidized [NADPH--hemoprotein reductase] + H2O + H(+). The catalysed reaction is tetradecanoate + reduced [NADPH--hemoprotein reductase] + O2 = 13-hydroxytetradecanoate + oxidized [NADPH--hemoprotein reductase] + H2O + H(+). The enzyme catalyses 4-nitrophenol + NADPH + O2 + H(+) = 4-nitrocatechol + NADP(+) + H2O. It functions in the pathway lipid metabolism; fatty acid metabolism. Its activity is regulated as follows. The omega-1 hydroxylase activity is stimulated by cytochrome b5. In terms of biological role, a cytochrome P450 monooxygenase involved in the metabolism of fatty acids. Mechanistically, uses molecular oxygen inserting one oxygen atom into a substrate, and reducing the second into a water molecule, with two electrons provided by NADPH via cytochrome P450 reductase (NADPH--hemoprotein reductase). Catalyzes the hydroxylation of carbon-hydrogen bonds. Hydroxylates fatty acids specifically at the omega-1 position displaying the highest catalytic activity for saturated fatty acids. May be involved in the oxidative metabolism of xenobiotics. The sequence is that of Cytochrome P450 2E1 from Homo sapiens (Human).